Consider the following 342-residue polypeptide: Arrestin domain-containing protein 5 (342 aa).

The protein belongs to the arrestin family. Testis-enriched.

It localises to the membrane. Its function is as follows. Plays an essential role in spermatogenesis. May be involved in the anchoring of the sperm head to the tail during spermatogenesis by affecting SEC22A-mediated SUN5 and NDC1 transport and localization. The polypeptide is Arrestin domain-containing protein 5 (ARRDC5) (Homo sapiens (Human)).